The following is a 756-amino-acid chain: Subtilisin-like protease SBT3.9 (756 aa).

The N-terminal stretch at 1-25 (MSKTILFLALFLSIVLNVQISFVVA) is a signal peptide. Positions 26–108 (ESKVYVVYLG…VIPNTLYEMT (83 aa)) are cleaved as a propeptide — activation peptide. The Inhibitor I9 domain maps to 29-106 (VYVVYLGEKE…VQVIPNTLYE (78 aa)). The Peptidase S8 domain occupies 112–603 (TWDYLGVSPG…GGLINPEKAV (492 aa)). Aspartate 142 acts as the Charge relay system in catalysis. 2 N-linked (GlcNAc...) asparagine glycosylation sites follow: asparagine 175 and asparagine 202. Histidine 218 serves as the catalytic Charge relay system. Asparagine 233, asparagine 357, asparagine 395, and asparagine 519 each carry an N-linked (GlcNAc...) asparagine glycan. One can recognise a PA domain in the interval 386–460 (DCEKLSANPN…ELGTDILFYI (75 aa)). Serine 534 serves as the catalytic Charge relay system.

The protein belongs to the peptidase S8 family.

It is found in the secreted. The polypeptide is Subtilisin-like protease SBT3.9 (Arabidopsis thaliana (Mouse-ear cress)).